A 337-amino-acid polypeptide reads, in one-letter code: Pyridoxal 5'-phosphate synthase subunit PdxS (337 aa).

Residue Asp-65 participates in D-ribose 5-phosphate binding. The active-site Schiff-base intermediate with D-ribose 5-phosphate is the Lys-122. Gly-194 is a D-ribose 5-phosphate binding site. Residue Lys-206 participates in D-glyceraldehyde 3-phosphate binding. Residues Gly-255 and 276–277 contribute to the D-ribose 5-phosphate site; that span reads GS.

The protein belongs to the PdxS/SNZ family. As to quaternary structure, in the presence of PdxT, forms a dodecamer of heterodimers.

It carries out the reaction aldehydo-D-ribose 5-phosphate + D-glyceraldehyde 3-phosphate + L-glutamine = pyridoxal 5'-phosphate + L-glutamate + phosphate + 3 H2O + H(+). It participates in cofactor biosynthesis; pyridoxal 5'-phosphate biosynthesis. Its function is as follows. Catalyzes the formation of pyridoxal 5'-phosphate from ribose 5-phosphate (RBP), glyceraldehyde 3-phosphate (G3P) and ammonia. The ammonia is provided by the PdxT subunit. Can also use ribulose 5-phosphate and dihydroxyacetone phosphate as substrates, resulting from enzyme-catalyzed isomerization of RBP and G3P, respectively. In Metallosphaera sedula (strain ATCC 51363 / DSM 5348 / JCM 9185 / NBRC 15509 / TH2), this protein is Pyridoxal 5'-phosphate synthase subunit PdxS.